Here is a 602-residue protein sequence, read N- to C-terminus: CDPK-related protein kinase (602 aa).

Residues 1-59 are disordered; the sequence is MGICVSKPSPEPDLHNHHTSIPVNDTSLPPQDNSIPPKDIAIPAQDNNKPPGKKSPFLP. Over residues 19-34 the composition is skewed to polar residues; it reads TSIPVNDTSLPPQDNS. A run of 3 repeats spans residues 20–26, 27–33, and 34–40. The 3 X 7 AA tandem repeats of S-[LI]-P-X-X-D-X stretch occupies residues 20-40; that stretch reads SIPVNDTSLPPQDNSIPPKDI. A Protein kinase domain is found at 148–410; that stretch reads FEVGEEVGRG…AAQALCHSWI (263 aa). ATP is bound by residues 154 to 162 and K180; that span reads VGRGHFGYT. D276 acts as the Proton acceptor in catalysis. EF-hand domains are found at residues 451–486, 487–527, 528–563, and 564–602; these read VDELFYLKEQFVLLEPTKNGTISLENIKQALMRNST, DAMK…LEAL, DRWEQHARCAYDLFEKDGNRAIMIEELASELGLGPS, and IPVHAVLHDWIRHTDGKLSFLGYVKLLHGVSTRAIAKAQ.

This sequence belongs to the protein kinase superfamily. CAMK Ser/Thr protein kinase family. CaMK subfamily.

It catalyses the reaction L-seryl-[protein] + ATP = O-phospho-L-seryl-[protein] + ADP + H(+). It carries out the reaction L-threonyl-[protein] + ATP = O-phospho-L-threonyl-[protein] + ADP + H(+). The sequence is that of CDPK-related protein kinase (CRK) from Daucus carota (Wild carrot).